A 137-amino-acid polypeptide reads, in one-letter code: Hydrogenase maturation factor HypA (137 aa).

Ni(2+) is bound at residue His-2. Zn(2+) is bound by residues Cys-73, Cys-75, Cys-105, and Cys-108.

It belongs to the HypA/HybF family.

In terms of biological role, involved in the maturation of [NiFe] hydrogenases. Required for nickel insertion into the metal center of the hydrogenase. The polypeptide is Hydrogenase maturation factor HypA (Methanosarcina mazei (strain ATCC BAA-159 / DSM 3647 / Goe1 / Go1 / JCM 11833 / OCM 88) (Methanosarcina frisia)).